Consider the following 409-residue polypeptide: TNF receptor-associated factor family protein DDB_G0273435/DDB_G0273505 (409 aa).

The segment at C20–C59 adopts an RING-type; degenerate zinc-finger fold. TRAF-type zinc fingers lie at residues K75–N145 and N145–S201. Residues H221–D250 adopt a coiled-coil conformation. An MATH domain is found at S252–I380.

Belongs to the TNF receptor-associated factor family. A subfamily.

It localises to the cytoplasm. Its function is as follows. Probable adapter protein and signal transducer that links members of the tumor necrosis factor receptor family to different signaling pathways by association with the receptor cytoplasmic domain and kinases. The sequence is that of TNF receptor-associated factor family protein DDB_G0273435/DDB_G0273505 from Dictyostelium discoideum (Social amoeba).